The sequence spans 228 residues: uncharacterized protein (228 aa).

Residues 5–119 (HILIVEDEEK…ELLARIRAAL (115 aa)) form the Response regulatory domain. Aspartate 54 carries the post-translational modification 4-aspartylphosphate. Positions 130–228 (GTFLTYDDLR…IRGVGYAIKG (99 aa)) form a DNA-binding region, ompR/PhoB-type.

In terms of processing, phosphorylated by YkoH.

The protein resides in the cytoplasm. Probable member of the two-component regulatory system YkoH/YkoG. This is an uncharacterized protein from Bacillus subtilis (strain 168).